A 550-amino-acid polypeptide reads, in one-letter code: Membrane protein insertase YidC (550 aa).

The helical transmembrane segment at isoleucine 3–tryptophan 23 threads the bilayer. Residues phenylalanine 34–proline 73 form a disordered region. Over residues proline 35 to proline 73 the composition is skewed to low complexity. Transmembrane regions (helical) follow at residues tryptophan 363 to alanine 383, phenylalanine 429 to leucine 449, proline 472 to proline 492, and methionine 503 to leucine 523.

This sequence belongs to the OXA1/ALB3/YidC family. Type 1 subfamily. As to quaternary structure, interacts with the Sec translocase complex via SecD. Specifically interacts with transmembrane segments of nascent integral membrane proteins during membrane integration.

It is found in the cell inner membrane. Functionally, required for the insertion and/or proper folding and/or complex formation of integral membrane proteins into the membrane. Involved in integration of membrane proteins that insert both dependently and independently of the Sec translocase complex, as well as at least some lipoproteins. Aids folding of multispanning membrane proteins. This Paraburkholderia phymatum (strain DSM 17167 / CIP 108236 / LMG 21445 / STM815) (Burkholderia phymatum) protein is Membrane protein insertase YidC.